Consider the following 905-residue polypeptide: Translation initiation factor IF-2 (905 aa).

A compositionally biased stretch (basic and acidic residues) spans 50 to 62; it reads HYEAKGGEDKAAE. The interval 50–306 is disordered; the sequence is HYEAKGGEDK…QKHEVGGVRL (257 aa). Residues 63–75 show a composition bias toward low complexity; sequence KNAPAATPASASK. The span at 89–125 shows a compositional bias: pro residues; it reads GPKPSAAPKPGAAPKPGGAPKPGGAPKPGATPKPGGA. Low complexity predominate over residues 161-171; sequence PFSTGSSSDRP. Over residues 233–276 the composition is skewed to gly residues; it reads GSGGGGRGRGGRGGGPGHGGPGHGGFRGRGGRRGGTAGAFGRPG. Positions 280–290 are enriched in basic residues; that stretch reads RRGKKSKRQKR. Residues 291 to 302 are compositionally biased toward basic and acidic residues; the sequence is HEFEEQQKHEVG. The region spanning 401 to 575 is the tr-type G domain; sequence KRPPVVTVMG…LTADAALELT (175 aa). Residues 410-417 are G1; that stretch reads GHVDHGKT. 410 to 417 serves as a coordination point for GTP; that stretch reads GHVDHGKT. The segment at 435 to 439 is G2; that stretch reads GITQG. Residues 460 to 463 form a G3 region; it reads DTPG. GTP is bound by residues 460 to 464 and 514 to 517; these read DTPGH and NKID. Positions 514 to 517 are G4; that stretch reads NKID. Positions 550–552 are G5; sequence SAK.

The protein belongs to the TRAFAC class translation factor GTPase superfamily. Classic translation factor GTPase family. IF-2 subfamily.

Its subcellular location is the cytoplasm. Its function is as follows. One of the essential components for the initiation of protein synthesis. Protects formylmethionyl-tRNA from spontaneous hydrolysis and promotes its binding to the 30S ribosomal subunits. Also involved in the hydrolysis of GTP during the formation of the 70S ribosomal complex. This is Translation initiation factor IF-2 from Corynebacterium aurimucosum (strain ATCC 700975 / DSM 44827 / CIP 107346 / CN-1) (Corynebacterium nigricans).